Consider the following 554-residue polypeptide: Chaperonin GroEL (554 aa).

ATP contacts are provided by residues 30-33, K51, 87-91, G416, and D503; these read TLGP and DGTTT.

This sequence belongs to the chaperonin (HSP60) family. Forms a cylinder of 14 subunits composed of two heptameric rings stacked back-to-back. Interacts with the co-chaperonin GroES.

The protein localises to the cytoplasm. It carries out the reaction ATP + H2O + a folded polypeptide = ADP + phosphate + an unfolded polypeptide.. In terms of biological role, together with its co-chaperonin GroES, plays an essential role in assisting protein folding. The GroEL-GroES system forms a nano-cage that allows encapsulation of the non-native substrate proteins and provides a physical environment optimized to promote and accelerate protein folding. This Holospora obtusa protein is Chaperonin GroEL.